Here is a 397-residue protein sequence, read N- to C-terminus: MNIHEYQAKALLKGYGAPVAEGVAILKAEEAEAAAKSLPGPLYVVKSQIHAGGRGKGKFKELSPEAKGGVRLAKSIEDVVANAKEMLGNTLVTAQTGEAGKQVNRLYIEDGADIDRELYCSLLVDRSVGKVAFVVSTEGGMDIEAVAHDTPEKIQTIAIDPETGVTAADVAKISAALKLEGAAAEDAKSLFPLLYRAFNEKDMSLLEINPLIVMKNGHLRVLDAKMSFDGNALFRHDDVRALRDETEEDAKEIEASKWDLAYVALDGNIGCMVNGAGLAMATMDIIKLYGKEPANFCDVGGGAGKEKVAAAFKIITADPKVEGILVNIFGGIMKCDVIAEGVIAAVKEVGLKVPLVVRLEGTNVELGKKILNESGLAITAADDLDDAAKKIVAAING.

Residues 9–254 (KALLKGYGAP…ETEEDAKEIE (246 aa)) enclose the ATP-grasp domain. ATP-binding positions include Lys46, 53-55 (GRG), Glu109, Ala112, and Glu117. Mg(2+)-binding residues include Asn209 and Asp223. Residues Asn274 and 331–333 (GIM) contribute to the substrate site.

This sequence belongs to the succinate/malate CoA ligase beta subunit family. Heterotetramer of two alpha and two beta subunits. Mg(2+) is required as a cofactor.

The catalysed reaction is succinate + ATP + CoA = succinyl-CoA + ADP + phosphate. It catalyses the reaction GTP + succinate + CoA = succinyl-CoA + GDP + phosphate. It functions in the pathway carbohydrate metabolism; tricarboxylic acid cycle; succinate from succinyl-CoA (ligase route): step 1/1. In terms of biological role, succinyl-CoA synthetase functions in the citric acid cycle (TCA), coupling the hydrolysis of succinyl-CoA to the synthesis of either ATP or GTP and thus represents the only step of substrate-level phosphorylation in the TCA. The beta subunit provides nucleotide specificity of the enzyme and binds the substrate succinate, while the binding sites for coenzyme A and phosphate are found in the alpha subunit. This chain is Succinate--CoA ligase [ADP-forming] subunit beta, found in Rhizobium etli (strain ATCC 51251 / DSM 11541 / JCM 21823 / NBRC 15573 / CFN 42).